A 107-amino-acid polypeptide reads, in one-letter code: Parvalbumin beta 2 (107 aa).

Residue serine 1 is modified to N-acetylserine. EF-hand domains follow at residues 37-72 and 89-107; these read XSPD…FSAS and DADG…LVKQ. Ca(2+) contacts are provided by aspartate 50, aspartate 52, serine 54, phenylalanine 56, glutamate 58, glutamate 61, aspartate 89, aspartate 91, aspartate 93, methionine 95, and glutamate 100.

Belongs to the parvalbumin family.

In muscle, parvalbumin is thought to be involved in relaxation after contraction. It binds two calcium ions. The sequence is that of Parvalbumin beta 2 from Oncorhynchus mykiss (Rainbow trout).